The chain runs to 875 residues: Alanine--tRNA ligase (875 aa).

The Zn(2+) site is built by histidine 564, histidine 568, cysteine 666, and histidine 670.

Belongs to the class-II aminoacyl-tRNA synthetase family. In terms of assembly, homotetramer. It depends on Zn(2+) as a cofactor.

The protein resides in the cytoplasm. It carries out the reaction tRNA(Ala) + L-alanine + ATP = L-alanyl-tRNA(Ala) + AMP + diphosphate. Functionally, catalyzes the attachment of alanine to tRNA(Ala) in a two-step reaction: alanine is first activated by ATP to form Ala-AMP and then transferred to the acceptor end of tRNA(Ala). Also edits incorrectly charged Ser-tRNA(Ala) and Gly-tRNA(Ala) via its editing domain. The chain is Alanine--tRNA ligase from Yersinia enterocolitica serotype O:8 / biotype 1B (strain NCTC 13174 / 8081).